We begin with the raw amino-acid sequence, 228 residues long: 7-cyano-7-deazaguanine synthase (228 aa).

16 to 26 (FSGGQDSTTCL) is a binding site for ATP. 4 residues coordinate Zn(2+): cysteine 195, cysteine 203, cysteine 206, and cysteine 209.

This sequence belongs to the QueC family. Requires Zn(2+) as cofactor.

The enzyme catalyses 7-carboxy-7-deazaguanine + NH4(+) + ATP = 7-cyano-7-deazaguanine + ADP + phosphate + H2O + H(+). It functions in the pathway purine metabolism; 7-cyano-7-deazaguanine biosynthesis. In terms of biological role, catalyzes the ATP-dependent conversion of 7-carboxy-7-deazaguanine (CDG) to 7-cyano-7-deazaguanine (preQ(0)). In Haemophilus influenzae (strain ATCC 51907 / DSM 11121 / KW20 / Rd), this protein is 7-cyano-7-deazaguanine synthase.